The following is a 391-amino-acid chain: Succinyl-diaminopimelate desuccinylase (391 aa).

Histidine 74 provides a ligand contact to Zn(2+). Aspartate 76 is an active-site residue. Aspartate 107 is a binding site for Zn(2+). The active-site Proton acceptor is the glutamate 141. Residues glutamate 142, glutamate 170, and histidine 360 each contribute to the Zn(2+) site.

Belongs to the peptidase M20A family. DapE subfamily. As to quaternary structure, homodimer. It depends on Zn(2+) as a cofactor. The cofactor is Co(2+).

It catalyses the reaction N-succinyl-(2S,6S)-2,6-diaminopimelate + H2O = (2S,6S)-2,6-diaminopimelate + succinate. Its pathway is amino-acid biosynthesis; L-lysine biosynthesis via DAP pathway; LL-2,6-diaminopimelate from (S)-tetrahydrodipicolinate (succinylase route): step 3/3. Its function is as follows. Catalyzes the hydrolysis of N-succinyl-L,L-diaminopimelic acid (SDAP), forming succinate and LL-2,6-diaminopimelate (DAP), an intermediate involved in the bacterial biosynthesis of lysine and meso-diaminopimelic acid, an essential component of bacterial cell walls. This chain is Succinyl-diaminopimelate desuccinylase, found in Variovorax paradoxus (strain S110).